Consider the following 165-residue polypeptide: MKTMKKYIKTAFFCSMYWLIVQLNIANLGTRIPDKYFRQKYIIFKSFNFEKHGKFWNKWFYVRKWKHKILDGHQLNQNIYDQRHLMTINTDEIEKMIIETKRAELIHWISILPVIIFNKGPRLVKYINIFYAMIANVPIIIVQRYNRPRLTQLLRILKRRGERHD.

The N-terminal stretch at 1-28 is a signal peptide; it reads MKTMKKYIKTAFFCSMYWLIVQLNIANL. Residues 126 to 145 traverse the membrane as a helical segment; it reads YINIFYAMIANVPIIIVQRY.

The protein belongs to the acyltransferase CrtO family.

The protein localises to the cell membrane. It participates in carotenoid biosynthesis; staphyloxanthin biosynthesis; staphyloxanthin from farnesyl diphosphate: step 5/5. Its function is as follows. Catalyzes the acylation of glycosyl-4,4'-diaponeurosporenoate, i.e. the esterification of glucose at the C6'' position with the carboxyl group of the C(15) fatty acid 12-methyltetradecanoic acid, to yield staphyloxanthin. This is the last step in the biosynthesis of this orange pigment, present in most staphylococci strains. The protein is Glycosyl-4,4'-diaponeurosporenoate acyltransferase (crtO) of Staphylococcus aureus (strain USA300).